A 183-amino-acid polypeptide reads, in one-letter code: Dual-action ribosomal maturation protein DarP (183 aa).

Belongs to the DarP family.

It is found in the cytoplasm. Its function is as follows. Member of a network of 50S ribosomal subunit biogenesis factors which assembles along the 30S-50S interface, preventing incorrect 23S rRNA structures from forming. Promotes peptidyl transferase center (PTC) maturation. The protein is Dual-action ribosomal maturation protein DarP of Escherichia coli O81 (strain ED1a).